The primary structure comprises 231 residues: NADH-ubiquinone oxidoreductase chain 4 (231 aa).

Transmembrane regions (helical) follow at residues 1 to 21 (PIAG…YGII), 34 to 54 (LFLP…LTCL), 63 to 85 (IAYS…TPWG), 89 to 111 (AMAL…NMTY), 124 to 146 (GLHN…NIAI), and 169 to 189 (TIII…HMFL).

The protein belongs to the complex I subunit 4 family.

It localises to the mitochondrion membrane. The catalysed reaction is a ubiquinone + NADH + 5 H(+)(in) = a ubiquinol + NAD(+) + 4 H(+)(out). Functionally, core subunit of the mitochondrial membrane respiratory chain NADH dehydrogenase (Complex I) that is believed to belong to the minimal assembly required for catalysis. Complex I functions in the transfer of electrons from NADH to the respiratory chain. The immediate electron acceptor for the enzyme is believed to be ubiquinone. The polypeptide is NADH-ubiquinone oxidoreductase chain 4 (MT-ND4) (Crotalus lepidus (Banded rock rattlesnake)).